A 125-amino-acid polypeptide reads, in one-letter code: Dirigent protein 22 (125 aa).

Residues Asn8, Asn30, and Asn65 are each glycosylated (N-linked (GlcNAc...) asparagine).

Belongs to the plant dirigent protein family. Homodimer.

It localises to the secreted. The protein resides in the extracellular space. It is found in the apoplast. Dirigent proteins impart stereoselectivity on the phenoxy radical-coupling reaction, yielding optically active lignans from two molecules of coniferyl alcohol in the biosynthesis of lignans, flavonolignans, and alkaloids and thus plays a central role in plant secondary metabolism. This is Dirigent protein 22 (DIR22) from Arabidopsis thaliana (Mouse-ear cress).